Here is a 434-residue protein sequence, read N- to C-terminus: Cullin-like protein 5 (434 aa).

The disordered stretch occupies residues 1–34 (MKRSISPDPFSSTKSPKLVHHSPDDGGAEGNPYR).

It belongs to the cullin family.

The protein is Cullin-like protein 5 of Arabidopsis thaliana (Mouse-ear cress).